The sequence spans 678 residues: Amino-acid acetyltransferase, mitochondrial (678 aa).

The segment at 86-111 (LKAQHPPKAQTEPTTGHSKGTVTQSL) is disordered. The segment covering 96 to 111 (TEPTTGHSKGTVTQSL) has biased composition (polar residues). One can recognise an N-acetyltransferase domain in the interval 499–668 (NRPRLSLDDP…YEQVCRSIQP (170 aa)).

It belongs to the acetyltransferase family.

It is found in the mitochondrion. The enzyme catalyses L-glutamate + acetyl-CoA = N-acetyl-L-glutamate + CoA + H(+). It functions in the pathway amino-acid biosynthesis; L-arginine biosynthesis; N(2)-acetyl-L-ornithine from L-glutamate: step 1/4. Functionally, N-acetylglutamate synthase involved in arginine biosynthesis. The polypeptide is Amino-acid acetyltransferase, mitochondrial (arg2) (Aspergillus oryzae (strain ATCC 42149 / RIB 40) (Yellow koji mold)).